The following is a 235-amino-acid chain: Protein fmp52-1, mitochondrial (235 aa).

Residues Met-1 to Arg-36 constitute a mitochondrion transit peptide.

This sequence belongs to the FMP52 family.

It localises to the mitochondrion outer membrane. The protein is Protein fmp52-1, mitochondrial (fmp521) of Aspergillus oryzae (strain ATCC 42149 / RIB 40) (Yellow koji mold).